The following is a 5142-amino-acid chain: MGNEASLEGEGLPEGLAAAAAAGGGASGAGSPSHTAIPAGMEADLSQLSEEERRQIAAVMSRAQGLPKGSVPPAAAESPSMHRKQELDSSHPPKQSGRPPDPGRPAQPGLSKSRTTDTFRSEQKLPGRSPSTISLKESKSRTDLKEEHKSSMMPGFLSEVNALSAVSSVVNKFNPFDLISDSEASQEETTKKQKVVQKEQGKPEGIIKPPLQQQPPKPIPKQQGPGRDPLQQDGTPKSISSQQPEKIKSQPPGTGKPIQGPTQTPQTDHAKLPLQRDASRPQTKQADIVRGESVKPSLPSPSKPPIQQPTPGKPPAQQPGHEKSQPGPAKPPAQPSGLTKPLAQQPGTVKPPVQPPGTTKPPAQPLGPAKPPAQQTGSEKPSSEQPGPKALAQPPGVGKTPAQQPGPAKPPTQQVGTPKPLAQQPGLQSPAKAPGPTKTPVQQPGPGKIPAQQAGPGKTSAQQTGPTKPPSQLPGPAKPPPQQPGPAKPPPQQPGSAKPPSQQPGSTKPPPQQPGPAKPSPQQPGSTKPPSQQPGSAKPSAQQPSPAKPSAQQSTKPVSQTGSGKPLQPPTVSPSAKQPPSQGLPKTICPLCNTTELLLHVPEKANFNTCTECQTTVCSLCGFNPNPHLTEVKEWLCLNCQMKRALGGDLAPVPSSPQPKLKTAPVTTTSAVSKSSPQPQQTSPKKDAAPKQDLSKAPEPKKPPPLVKQPTLHGSPSAKAKQPPEADSLSKPAPPKEPSVPSEQDKAPVADDKPKQPKMVKPTTDLVSSSSATTKPDIPSSKVQSQAEEKTTPPLKTDSAKPSQSFPPTGEKVSPFDSKAIPRPASDSKIISHPGPSSESKGQKQVDPVQKKEEPKKAQTKMSPKPDAKPMPKGSPTPPGPRPTAGQTVPTPQQSPKPQEQSRRFSLNLGSITDAPKSQPTTPQETVTGKLFGFGASIFSQASNLISTAGQPGPHSQSGPGAPMKQAPAPSQPPTSQGPPKSTGQAPPAPAKSIPVKKETKAPAAEKLEPKAEQAPTVKRTETEKKPPPIKDSKSLTAEPQKAVLPTKLEKSPKPESTCPLCKTELNIGSKDPPNFNTCTECKNQVCNLCGFNPTPHLTEIQEWLCLNCQTQRAISGQLGDIRKMPPAPSGPKASPMPVPTESSSQKTAVPPQVKLVKKQEQEVKTEAEKVILEKVKETLSMEKIPPMVTTDQKQEESKLEKDKASALQEKKPLPEEKKLIPEEEKIRSEEKKPLLEEKKPTPEDKKLLPEAKTSAPEEQKHDLLKSQVQIAEEKLEGRVAPKTVQEGKQPQTKMEGLPSGTPQSLPKEDDKTTKTIKEQPQPPCTAKPDQVEPGKEKTEKEDDKSDTSSSQQPKSPQGLSDTGYSSDGISSSLGEIPSLIPTDEKDILKGLKKDSFSQESSPSSPSDLAKLESTVLSILEAQASTLADEKSEKKTQPHEVSPEQPKDQEKTQSLSETLEITISEEEIKESQEERKDTFKKDSQQDIPSSKDHKEKSEFVDDITTRREPYDSVEESSESENSPVPQRKRRTSVGSSSSDEYKQEDSQGSGEEEDFIRKQIIEMSADEDASGSEDDEFIRNQLKEISSSTESQKKEETKGKGKITAGKHRRLTRKSSTSIDEDAGRRHSWHDEDDEAFDESPELKYRETKSQESEELVVTGGGGLRRFKTIELNSTIADKYSAESSQKKTSLYFDEEPELEMESLTDSPEDRSRGEGSSSLHASSFTPGTSPTSVSSLDEDSDSSPSHKKGESKQQRKARHRPHGPLLPTIEDSSEEEELREEEELLKEQEKQREIEQQQRKSSSKKSKKDKDELRAQRRRERPKTPPSNLSPIEDASPTEELRQAAEMEELHRSSCSEYSPSIESDPEGFEISPEKIIEVQKVYKLPTAVSLYSPTDEQSIMQKEGSQKALKSAEEMYEEMMHKTHKYKAFPAANERDEVFEKEPLYGGMLIEDYIYESLVEDTYNGSVDGSLLTRQEEENGFMQQKGREQKIRLSEQIYEDPMQKITDLQKEFYELESLHSVVPQEDIVSSSFIIPESHEIVDLGTMVTSTEEERKLLDADAAYEELMKRQQMQLTPGSSPTQAPIGEDMTESTMDFDRMPDASLTSSVLSGASLTDSTSSATLSIPDVKITQHFSTEEIEDEYVTDYTREIQEIIAHESLILTYSEPSESATSVPPSDTPSLTSSVSSVCTTDSSSPITTLDSITTVYTEPVDMITKFEDSEEISSSTYFPGSIIDYPEEISVSLDRTAPPDGRASADHIVISLSDMASSIIESVVPKPEGPVADTVSTDLLISEKDPVKKAKKETGNGIILEVLEAYRDKKELEAERTKSSLSETVFDHPPSSVIALPMKEQLSTTYFTSGETFGQEKPASQLPSGSPSVSSLPAKPRPFFRSSSLDISAQPPPPPPPPPPPPPPPPPPPPPPLPPPTSPKPTILPKKKLTVASPVTTATPLFDAVTTLETTAVLRSNGLPVTRICTTAPPPVPPKPSSIPSGLVFTHRPEPSKPPIAPKPVIPQLPTTTQKPTDIHPKPTGLSLTSSMTLNLVTSADYKLPSPTSPLSPHSNKSSPRFSKSLTETYVVITLPSEPGTPTDSSASQAITSWPLGSPSKDLVSVEPVFSVVPPVTAVEIPISSEQTFYISGALQTFSATPVTAPSSFQAAPTSVTQFLTTEVSKTEVSATRSTAPSVGLSSISITIPPEPLALDNIHLEKPQYKEDGKLQLVGDVIDLRTVPKVEVKTTDKCIDLSASTMDVKRQITANEVYGKQISAVQPSIINLSVTSSIVTPVSLATETVTFVTCTASASYTTGTESLVGAEHAMTTPLQLTTSKHAEPPYRIPSDQVFPIAREEAPINLSLGTPAHAVTLAITKPVTVPPVGVTNGWTDSTVSQGITDGEVVDLSTTKSHRTVVTMDESTSSVMTKIIEDEKPVDLTAGRRAVCCDVVYKLPFGRSCTAQQPATTLPEDRFGYRDDHYQYDRSGPYGYRGIGGMKPSMSDTNLAEAGHFFYKSKNAFDYSEGTDTAVDLTSGRVTTGEVMDYSSKTTGPYPETRQVISGAGISTPQYSTARMTPPPGPQYCVGSVLRSSNGVVYSSVATPTPSTFAITTQPGSIFSTTVRDLSGIHTADAVTSLPAMHHSQPMPRSYFITTGASETDIAVTGIDISASLQTITMESLTAETIDSVPTLTTASEVFPEVVGDESALLIVPEEDKQQQQLDLERELLELEKIKQQRFAEELEWERQEIQRFREQEKIMVQKKLEELQSMKQHLLFQQEEERQAQFMMRQETLAQQQLQLEQIQQLQQQLHQQLEEQKIRQIYQYNYDPSGTASPQTTTEQAILEGQYAALEGSQFWATEDATTTASAVVAIEIPQSQGWYTVQSDGVTQYIAPPGILSTVSEIPLTDVVVKEEKQPKKRSSGAKVRGQYDDMGENMTDDPRSFKKIVDSGVQTDDEDATDRSYVSRRRRTKKSVDTSVQTDDEDQDEWDMPTRSRRKARVGKYGDSMTEADKTKPLSKVSSIAVQTVAEISVQTEPVGTIRTPSIRARVDAKVEIIKHISAPEKTYKGGSLGCQTEADSDTQSPQYLSATSPPKDKKRPTPLEIGYSSHLRADSTVQLAPSPPKSPKVLYSPISPLSPGKALESAFVPYEKPLPDDISPQKVLHPDMAKVPPASPKTAKMMQRSMSDPKPLSPTADESSRAPFQYTEGYTTKGSQTMTSSGAQKKVKRTLPNPPPEEISTGTQSTFSTMGTVSRRRICRTNTMARAKILQDIDRELDLVERESAKLRKKQAELDEEEKEIDAKLRYLEMGINRRKEALLKEREKRERAYLQGVAEDRDYMSDSEVSSTRPTRIESQHGIERPRTAPQTEFSQFIPPQTQTESQLVPPTSPYTQYQYSSPALPTQAPTSYTQQSHFEQQTLYHQQVSPYQTQPTFQAVATMSFTPQVQPTPTPQPSYQLPSQMMVIQQKPRQTTLYLEPKITSNYEVIRNQPLMIAPVSTDNTFAVSHLGSKYNSLDLRIGLEERSSMASSPISSISADSFYADIDHHTPRNYVLIDDIGEITKGTAALSTAFSLHEKDLSKTDRLLRTTETRRSQEVTDFLAPLQSSSRLHSYVKAEEDPMEDPYELKLLKHQIKQEFRRGTESLDHLAGLSHYYHADTSYRHFPKSEKYSISRLTLEKQAAKQLPAAILYQKQSKHKKSLIDPKMSKFSPIQESRDLEPDYSSYMTSSTSSIGGISSRARLLQDDITFGLRKNITDQQKFMGSSLGTGLGTLGNTIRSALQDEADKPYSSGSRSRPSSRPSSVYGLDLSIKRDSSSSSLRLKAQEAEALDVSFSHASSSARTKPTSLPISQSRGRIPIVAQNSEEESPLSPVGQPMGMARAAAGPLPPISADTRDQFGSSHSLPEVQQHMREESRTRGYDRDIAFIMDDFQHAMSDSEAYHLRREETDWFDKPRESRLENGHGLDRKLPERLVHSRPLSQHQEQIIQMNGKTMHYIFPHARIKITRDSKDHTVSGNGLGIRIVGGKEIPGHSGEIGAYIAKILPGGSAEQTGKLMEGMQVLEWNGIPLTSKTYEEVQSIISQQSGEAEICVRLDLNMLSDSENSQHLELHEPPKAVDKAKSPGVDPKQLAAELQKVSLQQSPLVLSSVVEKGSHVHSGPTSAGSSSVPSPGQPGSPSVSKKKHGSSKPTDGTKVVSHPITGEIQLQINYDLGNLIIHILQARNLVPRDNNGYSDPFVKVYLLPGRGQVMVVQNASAEYKRRTKHVQKSLNPEWNQTVIYKSISMEQLKKKTLEVTVWDYDRFSSNDFLGEVLIDLSSTSHLDNTPRWYPLKEQTESIDHGKSHSSQSSQQSPKPSVIKSRSHGIFPDPSKDMQVPTIEKSHSSPGSSKSSSEGHLRSHGPSRSQSKTSVTQTHLEDAGAAIAAAEAAVQQLRIQPTKPPNHRPAESSVSTGSSGSSFGSGYSVDSEGSSSTAGETNLFPIPRIGKMGQNGQEPVKQPGVGVGLADTEAKTQVMGEIKIALKKEMKTDGEQLIVEILQCRNITYKFKSPDHLPDLYVKIYVMNISTQKKVIKKKTRVCRHDREPSFNETFRFSLSPAGHSLQILLFSNGGKFMKKTLIGEACIWLDKVDLRKRIVNWHKLLVSPTQTH.

Positions 1 to 21 (MGNEASLEGEGLPEGLAAAAA) are enriched in low complexity. Disordered stretches follow at residues 1–154 (MGNE…SMMP) and 177–583 (DLIS…PSQG). Composition is skewed to basic and acidic residues over residues 114–125 (RTTDTFRSEQKL), 136–150 (KESKSRTDLKEEHKS), and 188–202 (ETTKKQKVVQKEQGK). The segment covering 232–244 (QDGTPKSISSQQP) has biased composition (polar residues). Pro residues-rich tracts occupy residues 298-317 (LPSPSKPPIQQPTPGKPPAQ) and 352-371 (PVQPPGTTKPPAQPLGPAKP). Residues 376-385 (TGSEKPSSEQ) are compositionally biased toward polar residues. Residues 397–555 (VGKTPAQQPG…PAKPSAQQST (159 aa)) form a 10 X 10 AA tandem approximate repeats of P-A-K-P-Q-P-Q-Q-P-X region. Residues 467–493 (TKPPSQLPGPAKPPPQQPGPAKPPPQQ) are compositionally biased toward pro residues. A compositionally biased stretch (low complexity) spans 494-506 (PGSAKPPSQQPGS). Pro residues predominate over residues 507 to 522 (TKPPPQQPGPAKPSPQ). The segment covering 523–554 (QPGSTKPPSQQPGSAKPSAQQPSPAKPSAQQS) has biased composition (low complexity). The C4-type zinc finger occupies 589–613 (CPLCNTTELLLHVPEKANFNTCTEC). Disordered stretches follow at residues 650–929 (LAPV…TVTG) and 945–1058 (LIST…PEST). The segment covering 673 to 683 (SKSSPQPQQTS) has biased composition (low complexity). Basic and acidic residues-rich tracts occupy residues 684–702 (PKKDAAPKQDLSKAPEPKK) and 743–755 (EQDKAPVADDKPK). Residues 765–774 (DLVSSSSATT) are compositionally biased toward polar residues. Residues 841–857 (KGQKQVDPVQKKEEPKK) show a composition bias toward basic and acidic residues. Residues 873-882 (KGSPTPPGPR) are compositionally biased toward pro residues. Residues 889–927 (VPTPQQSPKPQEQSRRFSLNLGSITDAPKSQPTTPQETV) show a composition bias toward polar residues. A phosphoserine mark is found at serine 906 and serine 918. Phosphothreonine is present on threonine 922. Positions 949–969 (AGQPGPHSQSGPGAPMKQAPA) are enriched in low complexity. Composition is skewed to basic and acidic residues over residues 996–1012 (VKKETKAPAAEKLEPKA) and 1019–1034 (KRTETEKKPPPIKDSK). The segment at 1059 to 1082 (CPLCKTELNIGSKDPPNFNTCTEC) adopts a C4-type zinc-finger fold. Disordered stretches follow at residues 1120 to 1163 (GDIR…QEQE), 1183 to 1386 (EKIP…TDEK), 1391 to 1410 (GLKKDSFSQESSPSSPSDLA), and 1423 to 1868 (QAST…SDPE). The span at 1126 to 1139 (PPAPSGPKASPMPV) shows a compositional bias: pro residues. 3 stretches are compositionally biased toward basic and acidic residues: residues 1193–1265 (QKQE…HDLL), 1307–1318 (PKEDDKTTKTIK), and 1330–1347 (DQVEPGKEKTEKEDDKSD). The span at 1348-1358 (TSSSQQPKSPQ) shows a compositional bias: low complexity. 8 positions are modified to phosphoserine: serine 1356, serine 1366, serine 1367, serine 1396, serine 1398, serine 1401, serine 1402, and serine 1405. Residues 1359 to 1374 (GLSDTGYSSDGISSSL) are compositionally biased toward polar residues. Residues 1398–1407 (SQESSPSSPS) show a composition bias toward low complexity. Composition is skewed to basic and acidic residues over residues 1428 to 1451 (ADEKSEKKTQPHEVSPEQPKDQEK) and 1469 to 1510 (KESQ…REPY). 8 positions are modified to phosphoserine: serine 1516, serine 1517, serine 1519, serine 1522, serine 1546, serine 1549, serine 1570, and serine 1572. Residues 1564–1576 (SADEDASGSEDDE) are compositionally biased toward acidic residues. At threonine 1617 the chain carries Phosphothreonine. A phosphoserine mark is found at serine 1618, serine 1628, and serine 1640. Positions 1631–1640 (DEDDEAFDES) are enriched in acidic residues. The span at 1641–1652 (PELKYRETKSQE) shows a compositional bias: basic and acidic residues. Polar residues predominate over residues 1671–1689 (ELNSTIADKYSAESSQKKT). Acidic residues predominate over residues 1693 to 1703 (FDEEPELEMES). Position 1703 is a phosphoserine (serine 1703). Threonine 1705 is modified (phosphothreonine). 2 positions are modified to phosphoserine: serine 1707 and serine 1712. Residues 1715-1732 (EGSSSLHASSFTPGTSPT) show a composition bias toward polar residues. Over residues 1772 to 1785 (DSSEEEELREEEEL) the composition is skewed to acidic residues. Phosphoserine is present on residues serine 1773 and serine 1774. Residues 1786-1799 (LKEQEKQREIEQQQ) are compositionally biased toward basic and acidic residues. Threonine 1825 is modified (phosphothreonine). The residue at position 1831 (serine 1831) is a Phosphoserine. Basic and acidic residues predominate over residues 1840–1855 (EELRQAAEMEELHRSS). A phosphoserine mark is found at serine 1860, serine 1865, serine 1873, and serine 1894. Disordered stretches follow at residues 2169 to 2192 (PSESATSVPPSDTPSLTSSVSSVC), 2365 to 2438 (ETFG…PTIL), and 2504 to 2536 (EPSKPPIAPKPVIPQLPTTTQKPTDIHPKPTGL). 2 stretches are compositionally biased toward low complexity: residues 2174–2192 (TSVPPSDTPSLTSSVSSVC) and 2374–2387 (SQLPSGSPSVSSLP). 2 stretches are compositionally biased toward pro residues: residues 2404–2433 (QPPPPPPPPPPPPPPPPPPPPPPLPPPTSP) and 2506–2517 (SKPPIAPKPVIP). Serine 2562 is subject to Phosphoserine. A Phosphothreonine modification is found at threonine 3069. 2 disordered regions span residues 3407–3508 (EKQP…DKTK) and 3558–3626 (KTYK…LYSP). Over residues 3432–3441 (DDPRSFKKIV) the composition is skewed to basic and acidic residues. Phosphoserine is present on serine 3443. A phosphothreonine mark is found at threonine 3447 and threonine 3474. Positions 3474–3483 (TDDEDQDEWD) are enriched in acidic residues. The segment covering 3574 to 3585 (DTQSPQYLSATS) has biased composition (polar residues). Residues serine 3577, serine 3585, serine 3615, serine 3619, serine 3625, serine 3628, serine 3631, serine 3652, serine 3678, serine 3680, and serine 3686 each carry the phosphoserine modification. Disordered stretches follow at residues 3652–3746 (SPQK…MGTV) and 3833–3908 (YMSD…QQSH). 2 stretches are compositionally biased toward polar residues: residues 3701–3716 (EGYTTKGSQTMTSSGA) and 3733–3745 (STGTQSTFSTMGT). Phosphoserine is present on serine 3835. Residues 3845 to 3857 (TRIESQHGIERPR) show a composition bias toward basic and acidic residues. The segment covering 3859-3908 (APQTEFSQFIPPQTQTESQLVPPTSPYTQYQYSSPALPTQAPTSYTQQSH) has biased composition (polar residues). Phosphoserine occurs at positions 4088 and 4204. The disordered stretch occupies residues 4278–4301 (EADKPYSSGSRSRPSSRPSSVYGL). Over residues 4282 to 4301 (PYSSGSRSRPSSRPSSVYGL) the composition is skewed to low complexity. 5 positions are modified to phosphoserine: serine 4358, serine 4362, serine 4365, serine 4394, and serine 4430. A disordered region spans residues 4389 to 4411 (RDQFGSSHSLPEVQQHMREESRT). In terms of domain architecture, PDZ spans 4496-4590 (RIKITRDSKD…EAEICVRLDL (95 aa)). Disordered regions lie at residues 4597–4618 (ENSQHLELHEPPKAVDKAKSPG) and 4645–4690 (EKGS…TKVV). Over residues 4598–4615 (NSQHLELHEPPKAVDKAK) the composition is skewed to basic and acidic residues. The span at 4652 to 4673 (SGPTSAGSSSVPSPGQPGSPSV) shows a compositional bias: low complexity. A Phosphoserine modification is found at serine 4664. A C2 1 domain is found at 4694–4823 (ITGEIQLQIN…SHLDNTPRWY (130 aa)). Ca(2+) contacts are provided by aspartate 4723 and aspartate 4729. A Phosphoserine modification is found at serine 4778. Ca(2+) is bound by residues aspartate 4793, aspartate 4795, serine 4798, and aspartate 4801. 2 disordered regions span residues 4830–4907 (ESID…VTQT) and 4930–4986 (PTKP…QNGQ). Composition is skewed to low complexity over residues 4838–4853 (HSSQSSQQSPKPSVIK) and 4877–4887 (SSPGSSKSSSE). The segment covering 4895–4907 (PSRSQSKTSVTQT) has biased composition (polar residues). Residues 4941–4965 (SSVSTGSSGSSFGSGYSVDSEGSSS) show a composition bias toward low complexity. In terms of domain architecture, C2 2 spans 5007 to 5132 (VMGEIKIALK…DLRKRIVNWH (126 aa)).

In terms of assembly, interacts with BSN, ERC2/CAST1, RIMS1 and UNC13A. Interacts (via C-terminus) with TRIO (via N-terminus). Interacts with CTBP1. Interacts with SIAH1; this interaction negatively regulates SIAH1 E3 ligase activity. Directly interacts with GIT1 and GIT2. Ca(2+) is required as a cofactor. Moderately expressed in the developing cerebral cortex.

Its subcellular location is the presynaptic active zone. Scaffold protein of the presynaptic cytomatrix at the active zone (CAZ) which is the place in the synapse where neurotransmitter is released. After synthesis, participates in the formation of Golgi-derived membranous organelles termed Piccolo-Bassoon transport vesicles (PTVs) that are transported along axons to sites of nascent synaptic contacts. At the presynaptic active zone, regulates the spatial organization of synaptic vesicle cluster, the protein complexes that execute membrane fusion and compensatory endocytosis. Organizes as well the readily releasable pool of synaptic vesicles and safeguards a fraction of them to be not immediately available for action potential-induced release. Also functions in processes other than assembly such as the regulation of specific presynaptic protein ubiquitination by interacting with SIAH1 or the regulation of presynaptic autophagy. Also mediates synapse to nucleus communication leading to reconfiguration of gene expression by associating with the transcriptional corepressor CTBP1 and by subsequently reducing the size of its pool available for nuclear import. The chain is Protein piccolo from Homo sapiens (Human).